The primary structure comprises 124 residues: Small ribosomal subunit protein uS12 (124 aa).

Asp-89 bears the 3-methylthioaspartic acid mark.

Belongs to the universal ribosomal protein uS12 family. In terms of assembly, part of the 30S ribosomal subunit. Contacts proteins S8 and S17. May interact with IF1 in the 30S initiation complex.

In terms of biological role, with S4 and S5 plays an important role in translational accuracy. Interacts with and stabilizes bases of the 16S rRNA that are involved in tRNA selection in the A site and with the mRNA backbone. Located at the interface of the 30S and 50S subunits, it traverses the body of the 30S subunit contacting proteins on the other side and probably holding the rRNA structure together. The combined cluster of proteins S8, S12 and S17 appears to hold together the shoulder and platform of the 30S subunit. This is Small ribosomal subunit protein uS12 from Thermoanaerobacter pseudethanolicus (strain ATCC 33223 / 39E) (Clostridium thermohydrosulfuricum).